A 398-amino-acid chain; its full sequence is Acetylornithine aminotransferase (398 aa).

Pyridoxal 5'-phosphate contacts are provided by residues 105 to 106 and F138; that span reads GA. R141 contributes to the N(2)-acetyl-L-ornithine binding site. Pyridoxal 5'-phosphate is bound at residue 223-226; the sequence is DEVQ. The residue at position 252 (K252) is an N6-(pyridoxal phosphate)lysine. T280 contributes to the N(2)-acetyl-L-ornithine binding site. T281 provides a ligand contact to pyridoxal 5'-phosphate.

This sequence belongs to the class-III pyridoxal-phosphate-dependent aminotransferase family. ArgD subfamily. Homodimer. Pyridoxal 5'-phosphate serves as cofactor.

The protein resides in the cytoplasm. The enzyme catalyses N(2)-acetyl-L-ornithine + 2-oxoglutarate = N-acetyl-L-glutamate 5-semialdehyde + L-glutamate. Its pathway is amino-acid biosynthesis; L-arginine biosynthesis; N(2)-acetyl-L-ornithine from L-glutamate: step 4/4. This is Acetylornithine aminotransferase from Methanocaldococcus jannaschii (strain ATCC 43067 / DSM 2661 / JAL-1 / JCM 10045 / NBRC 100440) (Methanococcus jannaschii).